The sequence spans 468 residues: Na(+)/H(+) antiporter (468 aa).

The next 8 membrane-spanning stretches (helical) occupy residues 12 to 32 (HLAL…SEVF), 36 to 56 (LLVG…PHAA), 81 to 96 (DVRV…GAYF), 103 to 123 (IIVM…GFAY), 133 to 153 (GSLL…ALIV), 169 to 189 (LLIA…YFAI), 204 to 224 (WVLL…CVIG), and 258 to 278 (GIGT…GILF). A glycan (N-linked (GlcNAc...) asparagine) is linked at Asn-287. A helical transmembrane segment spans residues 293–313 (VPAFIDQTFSLLFFTYYGTII). Asn-319 carries N-linked (GlcNAc...) asparagine glycosylation. Transmembrane regions (helical) follow at residues 320–340 (WSVE…TLVC), 362–382 (ALFV…AFLA), and 408–428 (IIWP…GFSI). Phosphoserine is present on residues Ser-449 and Ser-451.

This sequence belongs to the fungal Na(+)/H(+) exchanger family.

Its subcellular location is the cell membrane. In terms of biological role, sodium export from cell, takes up external protons in exchange for internal sodium ions. Involved in regulation of pH. The chain is Na(+)/H(+) antiporter from Schizosaccharomyces pombe (strain 972 / ATCC 24843) (Fission yeast).